The following is a 180-amino-acid chain: Large ribosomal subunit protein uL6 (180 aa).

Belongs to the universal ribosomal protein uL6 family. As to quaternary structure, part of the 50S ribosomal subunit.

This protein binds to the 23S rRNA, and is important in its secondary structure. It is located near the subunit interface in the base of the L7/L12 stalk, and near the tRNA binding site of the peptidyltransferase center. The chain is Large ribosomal subunit protein uL6 from Flavobacterium johnsoniae (strain ATCC 17061 / DSM 2064 / JCM 8514 / BCRC 14874 / CCUG 350202 / NBRC 14942 / NCIMB 11054 / UW101) (Cytophaga johnsonae).